The following is a 453-amino-acid chain: Lysine histidine transporter-like 1 (453 aa).

Residues 1 to 44 (MYIQMTDGVPPPPEQSSLDHRIDELERQKEIDDWLPITSSRNAK) are Cytoplasmic-facing. 2 helical membrane passes run 45–65 (WWYS…LGLP) and 66–86 (FFMA…SWII). The Cytoplasmic segment spans residues 87 to 122 (TLYTLWQMVEMHEMVPGKRFDRYHELGQFAFGERLG). Residues 123 to 143 (LYIIVPQQIIVEVGVCIVYMV) form a helical membrane-spanning segment. The Extracellular segment spans residues 144 to 164 (TGGQSLKKFHEIACQDCSPIR). Residues 165–185 (LSFFIMIFASSHFVLSHLPNF) traverse the membrane as a helical segment. Over 186–187 (NS) the chain is Cytoplasmic. The chain crosses the membrane as a helical span at residues 188–208 (ISGVSLVAAVMSLSYSTIAWT). The Extracellular portion of the chain corresponds to 209–231 (ATAAKGVQEDVQYGYKSGTTAST). A helical membrane pass occupies residues 232–252 (VLSFFTGLGGIAFAYAGHNVV). The Cytoplasmic portion of the chain corresponds to 253 to 276 (LEIQATIPSTPSNPSKGPMWRGVV). Residues 277–297 (VAYVVVALCYFPVALVGYGVF) traverse the membrane as a helical segment. At 298 to 318 (GNAVLDNVLMSLETPVWAIAT) the chain is on the extracellular side. A helical transmembrane segment spans residues 319–339 (ANLFVVMHVIGSYQIFAMPVF). Residues 340–359 (DMVETFLVKKLNFKPSTVLR) lie on the Cytoplasmic side of the membrane. Residues 360–382 (FIVRNVYVALTMFIGIMIPFFGG) form a helical membrane-spanning segment. Over 383–385 (LLA) the chain is Extracellular. A helical transmembrane segment spans residues 386–408 (FFGGFAFAPTSYFLPCIMWLLIY). Topologically, residues 409 to 412 (KPKR) are cytoplasmic. The helical transmembrane segment at 413-433 (FSLSWWTNWVCIVLGVVLMIL) threads the bilayer. Over 434–453 (SSIGGLRQIIIQSKDYSFFS) the chain is Extracellular.

It belongs to the amino acid/polyamine transporter 2 family. Amino acid/auxin permease (AAAP) (TC 2.A.18.2) subfamily.

It is found in the cell membrane. Functionally, amino acid transporter. The chain is Lysine histidine transporter-like 1 from Arabidopsis thaliana (Mouse-ear cress).